The chain runs to 274 residues: NH(3)-dependent NAD(+) synthetase (274 aa).

46-53 lines the ATP pocket; sequence GISGGQDS. Aspartate 52 contacts Mg(2+). Arginine 140 provides a ligand contact to deamido-NAD(+). Threonine 160 contacts ATP. Glutamate 165 is a binding site for Mg(2+). Residues lysine 173 and aspartate 180 each coordinate deamido-NAD(+). Residues lysine 189 and threonine 211 each contribute to the ATP site. Deamido-NAD(+) is bound at residue 260 to 261; that stretch reads HK.

This sequence belongs to the NAD synthetase family. In terms of assembly, homodimer.

It carries out the reaction deamido-NAD(+) + NH4(+) + ATP = AMP + diphosphate + NAD(+) + H(+). It functions in the pathway cofactor biosynthesis; NAD(+) biosynthesis; NAD(+) from deamido-NAD(+) (ammonia route): step 1/1. In terms of biological role, catalyzes the ATP-dependent amidation of deamido-NAD to form NAD. Uses ammonia as a nitrogen source. This chain is NH(3)-dependent NAD(+) synthetase, found in Streptococcus uberis (strain ATCC BAA-854 / 0140J).